Here is a 333-residue protein sequence, read N- to C-terminus: ADP-L-glycero-D-manno-heptose-6-epimerase (333 aa).

Residues 11–12 (FI), 32–33 (DN), Lys39, Lys54, 76–80 (QGACS), and Asn93 contribute to the NADP(+) site. Residue Tyr140 is the Proton acceptor of the active site. Lys144 is an NADP(+) binding site. A substrate-binding site is contributed by Asn170. The NADP(+) site is built by Val171 and Lys179. The Proton acceptor role is filled by Lys179. Substrate is bound by residues Arg181, His188, 202–205 (FGGW), Arg215, and Tyr294.

Belongs to the NAD(P)-dependent epimerase/dehydratase family. HldD subfamily. In terms of assembly, homopentamer. Requires NADP(+) as cofactor.

It carries out the reaction ADP-D-glycero-beta-D-manno-heptose = ADP-L-glycero-beta-D-manno-heptose. It functions in the pathway nucleotide-sugar biosynthesis; ADP-L-glycero-beta-D-manno-heptose biosynthesis; ADP-L-glycero-beta-D-manno-heptose from D-glycero-beta-D-manno-heptose 7-phosphate: step 4/4. It participates in bacterial outer membrane biogenesis; LPS core biosynthesis. In terms of biological role, catalyzes the interconversion between ADP-D-glycero-beta-D-manno-heptose and ADP-L-glycero-beta-D-manno-heptose via an epimerization at carbon 6 of the heptose. The protein is ADP-L-glycero-D-manno-heptose-6-epimerase of Chromobacterium violaceum (strain ATCC 12472 / DSM 30191 / JCM 1249 / CCUG 213 / NBRC 12614 / NCIMB 9131 / NCTC 9757 / MK).